Consider the following 384-residue polypeptide: Spermidine/putrescine import ATP-binding protein PotA (384 aa).

Residues 6-238 enclose the ABC transporter domain; sequence ITFNNVSKTF…PINHFVANFI (233 aa). An ATP-binding site is contributed by 40-47; that stretch reads GASGSGKS.

It belongs to the ABC transporter superfamily. Spermidine/putrescine importer (TC 3.A.1.11.1) family. As to quaternary structure, the complex is composed of two ATP-binding proteins (PotA), two transmembrane proteins (PotB and PotC) and a solute-binding protein (PotD).

The protein resides in the cell membrane. It carries out the reaction ATP + H2O + polyamine-[polyamine-binding protein]Side 1 = ADP + phosphate + polyamineSide 2 + [polyamine-binding protein]Side 1.. Part of the ABC transporter complex PotABCD involved in spermidine/putrescine import. Responsible for energy coupling to the transport system. The chain is Spermidine/putrescine import ATP-binding protein PotA from Streptococcus pyogenes serotype M28 (strain MGAS6180).